Here is a 553-residue protein sequence, read N- to C-terminus: uncharacterized protein (553 aa).

The SWIB/MDM2 domain maps to 26 to 109; the sequence is RFEFVGWGSR…YDLLEKHYKE (84 aa). Residues 150 to 275 enclose the Plus3 domain; it reads AIVSDNIKLL…KAKKLHKDQT (126 aa). Disordered regions lie at residues 335–357 and 447–482; these read QNPEVSSPEAHKSDNEQRLSESP and PVNNVDNGSQVQPNPSEVIELSDDDEDDNGDGETLD. Residues 343-353 show a composition bias toward basic and acidic residues; that stretch reads EAHKSDNEQRL. Positions 447–461 are enriched in polar residues; the sequence is PVNNVDNGSQVQPNP. Positions 466–480 are enriched in acidic residues; that stretch reads ELSDDDEDDNGDGET. One can recognise a GYF domain in the interval 497–551; it reads KLNWLYKDPQGLVQGPFSLTQLKAWSDAEYFTKQFRVWMTGESMESAVLLTDVLR.

This is an uncharacterized protein from Arabidopsis thaliana (Mouse-ear cress).